We begin with the raw amino-acid sequence, 359 residues long: Carbamoyl phosphate synthase arginine-specific small chain (359 aa).

The tract at residues 1–168 (MKAYLVLATG…VETFEGNGPH (168 aa)) is CPSase. L-glutamine-binding residues include Ser45, Gly216, and Gly218. Residues 168 to 355 (HIVLIDYGFK…IDDVAAKGRE (188 aa)) enclose the Glutamine amidotransferase type-1 domain. The active-site Nucleophile is Cys243. 4 residues coordinate L-glutamine: Leu244, Gln247, Asn285, and Tyr288. Active-site residues include His328 and Glu330.

The protein belongs to the CarA family. In terms of assembly, composed of two chains; the small (or glutamine) chain promotes the hydrolysis of glutamine to ammonia, which is used by the large (or ammonia) chain to synthesize carbamoyl phosphate. Tetramer of heterodimers (alpha,beta)4.

It catalyses the reaction hydrogencarbonate + L-glutamine + 2 ATP + H2O = carbamoyl phosphate + L-glutamate + 2 ADP + phosphate + 2 H(+). The enzyme catalyses L-glutamine + H2O = L-glutamate + NH4(+). The protein operates within amino-acid biosynthesis; L-arginine biosynthesis; carbamoyl phosphate from bicarbonate: step 1/1. In terms of biological role, small subunit of the glutamine-dependent carbamoyl phosphate synthetase (CPSase). CPSase catalyzes the formation of carbamoyl phosphate from the ammonia moiety of glutamine, carbonate, and phosphate donated by ATP, constituting the first step of the biosynthetic pathway leading to arginine and/or urea. The small subunit (glutamine amidotransferase) binds and cleaves glutamine to supply the large subunit with the substrate ammonia. This chain is Carbamoyl phosphate synthase arginine-specific small chain, found in Halalkalibacterium halodurans (strain ATCC BAA-125 / DSM 18197 / FERM 7344 / JCM 9153 / C-125) (Bacillus halodurans).